The following is a 441-amino-acid chain: Glutamate-1-semialdehyde 2,1-aminomutase (441 aa).

At Lys275 the chain carries N6-(pyridoxal phosphate)lysine.

Belongs to the class-III pyridoxal-phosphate-dependent aminotransferase family. HemL subfamily. In terms of assembly, homodimer. Requires pyridoxal 5'-phosphate as cofactor.

It localises to the cytoplasm. It carries out the reaction (S)-4-amino-5-oxopentanoate = 5-aminolevulinate. It functions in the pathway porphyrin-containing compound metabolism; protoporphyrin-IX biosynthesis; 5-aminolevulinate from L-glutamyl-tRNA(Glu): step 2/2. The polypeptide is Glutamate-1-semialdehyde 2,1-aminomutase (Deinococcus deserti (strain DSM 17065 / CIP 109153 / LMG 22923 / VCD115)).